We begin with the raw amino-acid sequence, 256 residues long: UPF0246 protein PG_1544 (256 aa).

This sequence belongs to the UPF0246 family.

The protein is UPF0246 protein PG_1544 of Porphyromonas gingivalis (strain ATCC BAA-308 / W83).